Reading from the N-terminus, the 392-residue chain is Transcription factor GATA-4 (392 aa).

The tract at residues 75 to 113 (SSAYNPGTSHPPVSPRFTFSSSPPITAPSSREVSYSSPL) is disordered. Over residues 91–113 (FTFSSSPPITAPSSREVSYSSPL) the composition is skewed to polar residues. 2 GATA-type zinc fingers span residues 184–208 (CVNC…CNAC) and 238–262 (CANC…CNAC). 2 disordered regions span residues 279–339 (KEGI…HSNS) and 359–392 (MPSL…LVLA). The span at 284–293 (TRKRKPKNLS) shows a compositional bias: basic residues. Residues 302-316 (SGSDSLTPSTSSTNS) are compositionally biased toward low complexity. Residues 364-380 (LSPQNHHSTFNPSPQAN) show a composition bias toward polar residues.

As to expression, expressed at high levels in heart, small intestine, stomach, ovary, and liver. Found at much lower levels in lung, spleen, pancreas and skin.

It localises to the nucleus. Functionally, transcriptional activator that binds to the consensus sequence 5'-AGATAG-3'. Associated with cardiac specification and can regulate cardiac-specific transcription during embryogenesis. Activates the expression of cardiac MHC-alpha in vivo. The polypeptide is Transcription factor GATA-4 (gata4) (Xenopus laevis (African clawed frog)).